A 309-amino-acid polypeptide reads, in one-letter code: HPr kinase/phosphorylase (309 aa).

Catalysis depends on residues H138 and K159. Residue 153-160 (GQSGVGKS) coordinates ATP. Position 160 (S160) interacts with Mg(2+). D177 functions as the Proton acceptor; for phosphorylation activity. Proton donor; for dephosphorylation activity in the catalytic mechanism. Positions 201–210 (LEIRGLGIIN) are important for the catalytic mechanism of both phosphorylation and dephosphorylation. E202 is a Mg(2+) binding site. The active site involves R243. An important for the catalytic mechanism of dephosphorylation region spans residues 264-269 (PVRPGR).

The protein belongs to the HPrK/P family. In terms of assembly, homohexamer. The cofactor is Mg(2+).

The catalysed reaction is [HPr protein]-L-serine + ATP = [HPr protein]-O-phospho-L-serine + ADP + H(+). It carries out the reaction [HPr protein]-O-phospho-L-serine + phosphate + H(+) = [HPr protein]-L-serine + diphosphate. In terms of biological role, catalyzes the ATP- as well as the pyrophosphate-dependent phosphorylation of a specific serine residue in HPr, a phosphocarrier protein of the phosphoenolpyruvate-dependent sugar phosphotransferase system (PTS). HprK/P also catalyzes the pyrophosphate-producing, inorganic phosphate-dependent dephosphorylation (phosphorolysis) of seryl-phosphorylated HPr (P-Ser-HPr). The two antagonistic activities of HprK/P are regulated by several intracellular metabolites, which change their concentration in response to the absence or presence of rapidly metabolisable carbon sources (glucose, fructose, etc.) in the growth medium. Also phosphorylates/dephosphorylates the HPr-like catabolite repression protein crh on a specific serine residue. Therefore, by controlling the phosphorylation state of HPr and crh, HPrK/P is a sensor enzyme that plays a major role in the regulation of carbon metabolism and sugar transport: it mediates carbon catabolite repression (CCR), and regulates PTS-catalyzed carbohydrate uptake and inducer exclusion. This Bacillus mycoides (strain KBAB4) (Bacillus weihenstephanensis) protein is HPr kinase/phosphorylase.